A 535-amino-acid chain; its full sequence is Succinate-semialdehyde dehydrogenase, mitochondrial (535 aa).

The transit peptide at 1–47 (MATCIWLRSCGARRLGSTFPGCRLRPRAGGLVPASGPAPGPAQLRCY) directs the protein to the mitochondrion. Position 126 is an N6-acetyllysine; alternate (Lys-126). Lys-126 carries the post-translational modification N6-succinyllysine; alternate. An N6-succinyllysine mark is found at Lys-135 and Lys-184. NAD(+) contacts are provided by residues Arg-213 and 228–231 (KPAE). A substrate-binding site is contributed by Arg-213. Position 265 is an N6-acetyllysine; alternate (Lys-265). Lys-265 is subject to N6-succinyllysine; alternate. 284 to 289 (GSTTTG) provides a ligand contact to NAD(+). The Proton acceptor role is filled by Glu-306. Arg-334 provides a ligand contact to substrate. Cys-340 functions as the Nucleophile in the catalytic mechanism. Cys-340 and Cys-342 are oxidised to a cystine. N6-acetyllysine is present on Lys-365. Residue Lys-402 is modified to N6-succinyllysine. At Lys-411 the chain carries N6-acetyllysine. Ser-498 contributes to the substrate binding site. Position 499 is a phosphoserine (Ser-499).

Belongs to the aldehyde dehydrogenase family. In terms of assembly, homotetramer.

It localises to the mitochondrion. The catalysed reaction is succinate semialdehyde + NAD(+) + H2O = succinate + NADH + 2 H(+). Its pathway is amino-acid degradation; 4-aminobutanoate degradation. With respect to regulation, redox-regulated. Inhibited under oxydizing conditions. Catalyzes one step in the degradation of the inhibitory neurotransmitter gamma-aminobutyric acid (GABA). This chain is Succinate-semialdehyde dehydrogenase, mitochondrial (ALDH5A1), found in Pan troglodytes (Chimpanzee).